We begin with the raw amino-acid sequence, 183 residues long: Ribosome-recycling factor (183 aa).

It belongs to the RRF family.

It localises to the cytoplasm. Functionally, responsible for the release of ribosomes from messenger RNA at the termination of protein biosynthesis. May increase the efficiency of translation by recycling ribosomes from one round of translation to another. The sequence is that of Ribosome-recycling factor from Christiangramia forsetii (strain DSM 17595 / CGMCC 1.15422 / KT0803) (Gramella forsetii).